The sequence spans 108 residues: Tetrahydromethanopterin S-methyltransferase subunit B (108 aa).

The helical transmembrane segment at 79 to 99 (GMFFGFWVTMAILVLVTILAV) threads the bilayer.

This sequence belongs to the MtrB family. In terms of assembly, the complex is composed of 8 subunits; MtrA, MtrB, MtrC, MtrD, MtrE, MtrF, MtrG and MtrH.

It is found in the cell membrane. The catalysed reaction is 5-methyl-5,6,7,8-tetrahydromethanopterin + coenzyme M + 2 Na(+)(in) = 5,6,7,8-tetrahydromethanopterin + methyl-coenzyme M + 2 Na(+)(out). The protein operates within one-carbon metabolism; methanogenesis from CO(2); methyl-coenzyme M from 5,10-methylene-5,6,7,8-tetrahydromethanopterin: step 2/2. Functionally, part of a complex that catalyzes the formation of methyl-coenzyme M and tetrahydromethanopterin from coenzyme M and methyl-tetrahydromethanopterin. This is an energy-conserving, sodium-ion translocating step. The polypeptide is Tetrahydromethanopterin S-methyltransferase subunit B (Methanococcus maripaludis (strain C5 / ATCC BAA-1333)).